Consider the following 312-residue polypeptide: Bark storage protein A (312 aa).

An N-terminal signal peptide occupies residues 1–24 (MPQQSMQASLIDPIAEIERSNCKI). Asn-70 carries an N-linked (GlcNAc...) asparagine glycan.

The protein to wound-inducible poplar endochitinases. As to quaternary structure, monomer. In terms of tissue distribution, bark.

Functionally, may play a role in nitrogen storage. The chain is Bark storage protein A (BSPA) from Populus deltoides (Eastern poplar).